Here is a 1792-residue protein sequence, read N- to C-terminus: MSCVHYKFSSKLNYDTVTFDGLHISLCDLKKQIMGREKLKAADCDLQITNAQTKEEYTDDNALIPKNSSVIVRRIPIGGVKSTSKTYVISRTEPAMATTKAIDDSSASISLAQLTKTANLAEANASEEDKIKAMMSQSGHEYDPINYMKKPLGPPPPSYTCFRCGKPGHYIKNCPTNGDKNFESGPRIKKSTGIPRSFMMEVKDPNMKGAMLTNTGKYAIPTIDAEAYAIGKKEKPPFLPEEPSSSSEEDDPIPDELLCLICKDIMTDAVVIPCCGNSYCDECIRTALLESDEHTCPTCHQNDVSPDALIANKFLRQAVNNFKNETGYTKRLRKQLPPPPPPIPPPRPLIQRNLQPLMRSPISRQQDPLMIPVTSSSTHPAPSISSLTSNQSSLAPPVSGNPSSAPAPVPDITATVSISVHSEKSDGPFRDSDNKILPAAALASEHSKGTSSIAITALMEEKGYQVPVLGTPSLLGQSLLHGQLIPTTGPVRINTARPGGGRPGWEHSNKLGYLVSPPQQIRRGERSCYRSINRGRHHSERSQRTQGPSLPATPVFVPVPPPPLYPPPPHTLPLPPGVPPPQFSPQFPPGQPPPAGYSVPPPGFPPAPANLSTPWVSSGVQTAHSNTIPTTQAPPLSREEFYREQRRLKEEEKKKSKLDEFTNDFAKELMEYKKIQKERRRSFSRSKSPYSGSSYSRSSYTYSKSRSGSTRSRSYSRSFSRSHSRSYSRSPPYPRRGRGKSRNYRSRSRSHGYHRSRSRSPPYRRYHSRSRSPQAFRGQSPNKRNVPQGETEREYFNRYREVPPPYDMKAYYGRSVDFRDPFEKERYREWERKYREWYEKYYKGYAAGAQPRPSANRENFSPERFLPLNIRNSPFTRGRREDYVGGQSHRSRNIGSNYPEKLSARDGHNQKDNTKSKEKESENAPGDGKGNKHKKHRKRRKGEESEGFLNPELLETSRKSREPTGVEENKTDSLFVLPSRDDATPVRDEPMDAESITFKSVSEKDKRERDKPKAKGDKTKRKNDGSAVSKKENIVKPAKGPQEKVDGERERSPRSEPPIKKAKEETPKTDNTKSSSSSQKDEKITGTPRKAHSKSAKEHQETKPVKEEKVKKDYSKDVKSEKLTTKEEKAKKPNEKNKPLDNKGEKRKRKTEEKGVDKDFESSSMKISKLEVTEIVKPSPKRKMEPDTEKMDRTPEKDKISLSAPAKKIKLNRETGKKIGSTENISNTKEPSEKLESTSSKVKQEKVKGKVRRKVTGTEGSSSTLVDYTSTSSTGGSPVRKSEEKTDTKRTVIKTMEEYNNDNTAPAEDVIIMIQVPQSKWDKDDFESEEEDVKSTQPISSVGKPASVIKNVSTKPSNIVKYPEKESEPSEKIQKFTKDVSHEIIQHEVKSSKNSASSEKGKTKDRDYSVLEKENPEKRKNSTQPEKESNLDRLNEQGNFKSLSQSSKEARTSDKHDSTRASSNKDFTPNRDKKTDYDTREYSSSKRRDEKNELTRRKDSPSRNKDSASGQKNKPREERDLPKKGTGDSKKSNSSPSRDRKPHDHKATYDTKRPNEETKSVDKNPCKDREKHVLEARNNKESSGNKLLYILNPPETQVEKEQITGQIDKSTVKPKPQLSHSSRLSSDLTRETDEAAFEPDYNESDSESNVSVKEEESSGNISKDLKDKIVEKAKESLDTAAVVQVGISRNQSHSSPSVSPSRSHSPSGSQTRSHSSSASSAESQDSKKKKKKKEKKKHKKHKKHKKHKKHAGTEVELEKSQKHKHKKKKSKKNKDKEKEKEKDDQKVKSVTV.

The DWNN domain maps to 4 to 76 (VHYKFSSKLN…NSSVIVRRIP (73 aa)). Lys-130 is subject to N6-acetyllysine. The CCHC-type zinc-finger motif lies at 159–176 (YTCFRCGKPGHYIKNCPT). Residues Ser-244, Ser-245, Ser-246, and Ser-247 each carry the phosphoserine modification. Residues 259–300 (CLICKDIMTDAVVIPCCGNSYCDECIRTALLESDEHTCPTCH) form an RING-type; degenerate zinc finger. The segment at 326–347 (TGYTKRLRKQLPPPPPPIPPPR) is disordered. Positions 336–347 (LPPPPPPIPPPR) are enriched in pro residues. Ser-360 carries the post-translational modification Phosphoserine. Residues 371–410 (IPVTSSSTHPAPSISSLTSNQSSLAPPVSGNPSSAPAPVP) form a disordered region. Residues 374-393 (TSSSTHPAPSISSLTSNQSS) are compositionally biased toward low complexity. Ser-516 carries the post-translational modification Phosphoserine. Disordered regions lie at residues 532-601 (INRG…SVPP), 621-640 (QTAH…SREE), and 645-799 (QRRL…FNRY). The segment at 549–571 (SLPATPVFVPVPPPPLYPPPPHT) is (Microbial infection) Interaction with Ebolavirus VP30. The segment covering 557–601 (VPVPPPPLYPPPPHTLPLPPGVPPPQFSPQFPPGQPPPAGYSVPP) has biased composition (pro residues). The short motif at 560-565 (PPPPLY) is the PPxPxY element. The span at 621 to 634 (QTAHSNTIPTTQAP) shows a compositional bias: polar residues. Over residues 645-675 (QRRLKEEEKKKSKLDEFTNDFAKELMEYKKI) the composition is skewed to basic and acidic residues. Low complexity predominate over residues 685–719 (RSKSPYSGSSYSRSSYTYSKSRSGSTRSRSYSRSF). The segment covering 735-770 (RRGRGKSRNYRSRSRSHGYHRSRSRSPPYRRYHSRS) has biased composition (basic residues). Phosphoserine occurs at positions 768, 770, 772, and 780. Over residues 790-799 (ETEREYFNRY) the composition is skewed to basic and acidic residues. A phosphoserine mark is found at Ser-815, Ser-861, and Ser-873. Disordered regions lie at residues 847–1290 (AGAQ…DTKR), 1321–1348 (WDKD…PASV), 1360–1665 (VKYP…SKDL), and 1682–1792 (VVQV…SVTV). Residues 902–922 (LSARDGHNQKDNTKSKEKESE) are compositionally biased toward basic and acidic residues. Residues 931–940 (NKHKKHRKRR) are compositionally biased toward basic residues. Composition is skewed to basic and acidic residues over residues 955–971 (ETSR…ENKT), 979–990 (SRDDATPVRDEP), 1001–1017 (VSEK…AKGD), 1041–1071 (PQEK…KTDN), and 1095–1161 (SAKE…KDFE). Residue Ser-957 is modified to Phosphoserine. Residues 982–1139 (DATPVRDEPM…AKKPNEKNKP (158 aa)) are interaction with RB1. A Phosphothreonine modification is found at Thr-984. Glycyl lysine isopeptide (Lys-Gly) (interchain with G-Cter in SUMO2) cross-links involve residues Lys-1106 and Lys-1169. Ser-1179 is modified (phosphoserine). Residues 1182 to 1200 (RKMEPDTEKMDRTPEKDKI) show a composition bias toward basic and acidic residues. Ser-1221 is modified (phosphoserine). Over residues 1230–1248 (EPSEKLESTSSKVKQEKVK) the composition is skewed to basic and acidic residues. Positions 1258-1276 (TEGSSSTLVDYTSTSSTGG) are enriched in polar residues. Thr-1271 bears the Phosphothreonine mark. Position 1277 is a phosphoserine (Ser-1277). Basic and acidic residues predominate over residues 1280–1290 (RKSEEKTDTKR). 3 positions are modified to phosphoserine: Ser-1328, Ser-1341, and Ser-1347. Composition is skewed to basic and acidic residues over residues 1362–1391 (YPEK…EVKS) and 1399–1435 (EKGK…DRLN). Residues 1433-1544 (RLNEQGNFKS…SPSRDRKPHD (112 aa)) are interaction with p53. The span at 1436-1447 (EQGNFKSLSQSS) shows a compositional bias: polar residues. 3 stretches are compositionally biased toward basic and acidic residues: residues 1448 to 1459 (KEARTSDKHDST), 1468 to 1506 (TPNR…RNKD), and 1514 to 1580 (KPRE…RNNK). Thr-1468 is subject to Phosphothreonine. Residues 1618-1627 (LSHSSRLSSD) show a composition bias toward polar residues. A compositionally biased stretch (acidic residues) spans 1634–1646 (EAAFEPDYNESDS). Phosphoserine is present on residues Ser-1646, Ser-1648, and Ser-1651. The span at 1692-1723 (SHSSPSVSPSRSHSPSGSQTRSHSSSASSAES) shows a compositional bias: low complexity. Basic residues predominate over residues 1727-1750 (KKKKKKKEKKKHKKHKKHKKHKKH). Residues 1751-1760 (AGTEVELEKS) show a composition bias toward basic and acidic residues. The segment covering 1761-1773 (QKHKHKKKKSKKN) has biased composition (basic residues). Over residues 1774 to 1792 (KDKEKEKEKDDQKVKSVTV) the composition is skewed to basic and acidic residues.

In terms of assembly, interacts with p53/TP53 and RB1. Interacts also with MDM2 and YBX1. Interacts with NEK6. Interacts with ZBTB38. As to quaternary structure, (Microbial infection) [Isoform 1]: Interacts with ebolavirus VP30. Post-translationally, phosphorylated by NEK6. As to expression, highly expressed in the placenta and testis. Expressed at lower levels in the brain, heart, kidney, liver and lung. Overexpressed in esophageal cancer.

The protein resides in the nucleus. The protein localises to the nucleolus. It is found in the chromosome. It localises to the cytoplasm. Its subcellular location is the cytoskeleton. The protein resides in the microtubule organizing center. The protein localises to the centrosome. It carries out the reaction S-ubiquitinyl-[E2 ubiquitin-conjugating enzyme]-L-cysteine + [acceptor protein]-L-lysine = [E2 ubiquitin-conjugating enzyme]-L-cysteine + N(6)-ubiquitinyl-[acceptor protein]-L-lysine.. It functions in the pathway protein modification; protein ubiquitination. Its function is as follows. E3 ubiquitin-protein ligase which promotes ubiquitination of YBX1, leading to its degradation by the proteasome. May play a role as a scaffold protein to promote the assembly of the p53/TP53-MDM2 complex, resulting in increase of MDM2-mediated ubiquitination and degradation of p53/TP53; may function as negative regulator of p53/TP53, leading to both apoptosis and cell growth. Regulates DNA-replication and the stability of chromosomal common fragile sites (CFSs) in a ZBTB38- and MCM10-dependent manner. Controls ZBTB38 protein stability and abundance via ubiquitination and proteasomal degradation, and ZBTB38 in turn negatively regulates the expression of MCM10 which plays an important role in DNA-replication. (Microbial infection) [Isoform 1]: Restricts ebolavirus replication probably by impairing the vp30-NP interaction, and thus viral transcription. In Homo sapiens (Human), this protein is E3 ubiquitin-protein ligase RBBP6 (RBBP6).